We begin with the raw amino-acid sequence, 1010 residues long: PHD finger protein 20 (1010 aa).

Tudor domains follow at residues 4–69 and 83–147; these read HPPN…RPLE and GSSE…GNAR. Disordered stretches follow at residues 142–373 and 483–609; these read IVGN…EGQL and EKSP…GKLK. Residues 147 to 246 are compositionally biased toward basic and acidic residues; the sequence is RPKETDHKSL…VEKKPEKDLV (100 aa). Ser-159 carries the phosphoserine modification. Positions 257–269 form a DNA-binding region, a.T hook; that stretch reads KRKRGRPPSITPT. Residues 267–280 are compositionally biased toward polar residues; it reads TPTAVDSNSQTLQP. 3 stretches are compositionally biased toward basic and acidic residues: residues 292–325, 483–493, and 525–541; these read KRSD…DLSR, EKSPEPEEGPG, and AKEK…ELVR. The C2H2-type zinc finger occupies 455–485; sequence FRCKVLDCLKFFRKAKLLHYHMKYFHGMEKS. Over residues 542–554 the composition is skewed to basic residues; the sequence is VKPKKKKKKKKKT. The PHD-type zinc-finger motif lies at 657-703; that stretch reads RCICEVQEENDFMIQCEECQCWQHGVCMGLLEENVPEKYTCYVCQDP. The interval 804-827 is disordered; that stretch reads RSEESPSYRTLNGAVEKPSPLPRS. Lys-841 carries the post-translational modification N6-acetyllysine. Ser-876 and Ser-878 each carry phosphoserine. The disordered stretch occupies residues 877–902; the sequence is LSPRLGWPIDQDRSRGDIDPKPSSPK. Over residues 886–902 the composition is skewed to basic and acidic residues; sequence DQDRSRGDIDPKPSSPK.

As to quaternary structure, homodimer; disulfide-linked. Component of some MLL1/MLL complex, at least composed of the core components KMT2A/MLL1, ASH2L, HCFC1, WDR5 and RBBP5, as well as the facultative components BACC1, CHD8, E2F6, HSP70, INO80C, KANSL1, LAS1L, MAX, MCRS1, MGA, MYST1/MOF, PELP1, PHF20, PRP31, RING2, RUVB1/TIP49A, RUVB2/TIP49B, SENP3, TAF1, TAF4, TAF6, TAF7, TAF9 and TEX10. Component of the NSL complex at least composed of MOF/KAT8, KANSL1, KANSL2, KANSL3, MCRS1, PHF20, OGT1/OGT, WDR5 and HCFC1. Post-translationally, ubiquitinated by TRIM26; leading to proteasomal degradation.

It localises to the nucleus. Its function is as follows. Contributes to methyllysine-dependent p53/TP53 stabilization and up-regulation after DNA damage. Methyllysine-binding protein, component of the MOF histone acetyltransferase protein complex. Not required for maintaining the global histone H4 'Lys-16' acetylation (H4K16ac) levels or locus specific histone acetylation, but instead works downstream in transcriptional regulation of MOF target genes. As part of the NSL complex it may be involved in acetylation of nucleosomal histone H4 on several lysine residues. This is PHD finger protein 20 (Phf20) from Mus musculus (Mouse).